Reading from the N-terminus, the 269-residue chain is Tryptophan synthase alpha chain (269 aa).

Residues Glu49 and Asp60 each act as proton acceptor in the active site.

This sequence belongs to the TrpA family. Tetramer of two alpha and two beta chains.

It carries out the reaction (1S,2R)-1-C-(indol-3-yl)glycerol 3-phosphate + L-serine = D-glyceraldehyde 3-phosphate + L-tryptophan + H2O. The protein operates within amino-acid biosynthesis; L-tryptophan biosynthesis; L-tryptophan from chorismate: step 5/5. The alpha subunit is responsible for the aldol cleavage of indoleglycerol phosphate to indole and glyceraldehyde 3-phosphate. This chain is Tryptophan synthase alpha chain, found in Ectopseudomonas mendocina (strain ymp) (Pseudomonas mendocina).